We begin with the raw amino-acid sequence, 215 residues long: Golgi-associated RAB2 interactor protein 5A (215 aa).

Disordered regions lie at residues M1 to G20 and Q174 to L215. Over residues A178–R191 the composition is skewed to acidic residues.

Belongs to the GARIN family. In terms of assembly, interacts (via N-terminus) with RAB2B (in GTP-bound form).

It is found in the golgi apparatus. Functionally, RAB2B effector protein which promotes cytosolic DNA-induced innate immune responses. Regulates IFN responses against DNA viruses by regulating the CGAS-STING signaling axis. The polypeptide is Golgi-associated RAB2 interactor protein 5A (GARIN5A) (Bos taurus (Bovine)).